A 72-amino-acid polypeptide reads, in one-letter code: Aurein-2.5 (72 aa).

The signal sequence occupies residues 1 to 22 (MAFLKKSLFLVLFLGLVSLSIC). A propeptide spanning residues 23–49 (EKEKRQNEEDEDENEAANHEEGSEEKR) is cleaved from the precursor. The segment at 27–47 (RQNEEDEDENEAANHEEGSEE) is disordered. Positions 38–47 (AANHEEGSEE) are enriched in basic and acidic residues. At L65 the chain carries Leucine amide. The propeptide occupies 69–72 (NDLE).

It belongs to the frog skin active peptide (FSAP) family. Aurein subfamily. As to quaternary structure, may be monomeric or may oligomerize as homodimers or homotrimers in Gram-positive and Gram-negative bacteria mimetic membranes. Post-translationally, C-terminal amidation enhances antibacterial activity. This increase may be due to stabilization of the alpha-helical structure at the membrane interface. Expressed by the skin dorsal glands.

The protein localises to the secreted. It is found in the target cell membrane. Its function is as follows. Amphipathic alpha-helical antimicrobial peptide with moderate to potent activity against Gram-positive bacteria, Gram-negative bacteria and fungi. Also shows a weak activity against biofilm of both Gram-positive and Gram-negative bacteria. Probably acts by disturbing membrane functions with its amphipathic structure. Kills fungi via membranolytic action. Enhanced sterol levels in lipid composition membranes reduce interaction of this peptide with membranes, having a protective effect against the lytic ability of the peptide. Shows anticancer activity. The polypeptide is Aurein-2.5 (Ranoidea aurea (Green and golden bell frog)).